Reading from the N-terminus, the 554-residue chain is (+)-delta-cadinene synthase isozyme XC1 (554 aa).

The segment covering 1-16 has biased composition (low complexity); the sequence is MASQVSQMPSSSPLSS. Positions 1–23 are disordered; sequence MASQVSQMPSSSPLSSNKDEMRP. Residues Asp307, Asp311, Asp451, and Glu455 each contribute to the Mg(2+) site. A DDXXD motif motif is present at residues 307-311; that stretch reads DDTYD.

This sequence belongs to the terpene synthase family. Mg(2+) is required as a cofactor.

The catalysed reaction is (2E,6E)-farnesyl diphosphate = (1S,8aR)-delta-cadinene + diphosphate. It participates in secondary metabolite biosynthesis; terpenoid biosynthesis. Responsible for the cyclization of trans,trans-farnesyl diphosphate (FPP) to (+)-delta cadinene. This is (+)-delta-cadinene synthase isozyme XC1 from Gossypium arboreum (Tree cotton).